Here is a 262-residue protein sequence, read N- to C-terminus: Acetaldehyde dehydrogenase 7 (262 aa).

10 to 13 (SGNI) contacts NAD(+). Cysteine 128 functions as the Acyl-thioester intermediate in the catalytic mechanism. 159-167 (SAGPGTRAN) contacts NAD(+).

Belongs to the acetaldehyde dehydrogenase family.

It catalyses the reaction acetaldehyde + NAD(+) + CoA = acetyl-CoA + NADH + H(+). In Rhodococcus jostii (strain RHA1), this protein is Acetaldehyde dehydrogenase 7.